Here is a 427-residue protein sequence, read N- to C-terminus: L-rhamnose isomerase (427 aa).

Residues His264, Asp296, and Asp298 each coordinate Mn(2+).

Belongs to the rhamnose isomerase family. Requires Mn(2+) as cofactor.

Its subcellular location is the cytoplasm. The catalysed reaction is L-rhamnopyranose = L-rhamnulose. It functions in the pathway carbohydrate degradation; L-rhamnose degradation; glycerone phosphate from L-rhamnose: step 1/3. Catalyzes the interconversion of L-rhamnose and L-rhamnulose. This is L-rhamnose isomerase from Lactiplantibacillus plantarum (strain ATCC BAA-793 / NCIMB 8826 / WCFS1) (Lactobacillus plantarum).